The primary structure comprises 93 residues: Neutrophil cationic peptide 1 type A (93 aa).

Positions 1-19 (MRTVPLFAACLLLTLMAQA) are cleaved as a signal peptide. A propeptide spanning residues 20-62 (EPLPRAADHSDTKMKGDREDHVAVISFWEEESTSLEDAGAGAG) is cleaved from the precursor. Disulfide bonds link Cys-65–Cys-93, Cys-67–Cys-82, and Cys-72–Cys-92.

It belongs to the alpha-defensin family.

The protein resides in the secreted. In terms of biological role, has antibiotic, anti-fungi and antiviral activity. The polypeptide is Neutrophil cationic peptide 1 type A (Cavia porcellus (Guinea pig)).